The chain runs to 186 residues: ATP-dependent protease subunit HslV (186 aa).

Residue T14 is part of the active site. Residues A168, C171, and T174 each contribute to the Na(+) site.

Belongs to the peptidase T1B family. HslV subfamily. A double ring-shaped homohexamer of HslV is capped on each side by a ring-shaped HslU homohexamer. The assembly of the HslU/HslV complex is dependent on binding of ATP.

It localises to the cytoplasm. It catalyses the reaction ATP-dependent cleavage of peptide bonds with broad specificity.. Allosterically activated by HslU binding. In terms of biological role, protease subunit of a proteasome-like degradation complex believed to be a general protein degrading machinery. The protein is ATP-dependent protease subunit HslV of Methylorubrum extorquens (strain CM4 / NCIMB 13688) (Methylobacterium extorquens).